A 254-amino-acid polypeptide reads, in one-letter code: Distal membrane-arm assembly complex protein 2 (254 aa).

S250 carries the post-translational modification Phosphoserine.

The protein belongs to the ATP synthase subunit s family. As to quaternary structure, interacts with incompletely assembled mitochondrial NADH:ubiquinone oxidoreductase complex (complex I).

Its subcellular location is the mitochondrion. Its function is as follows. Required for the assembly of the mitochondrial NADH:ubiquinone oxidoreductase complex (complex I). Involved in the assembly of the distal region of complex I. The protein is Distal membrane-arm assembly complex protein 2 of Rattus norvegicus (Rat).